Here is a 256-residue protein sequence, read N- to C-terminus: Ferritin-3, chloroplastic (256 aa).

A chloroplast-targeting transit peptide spans 1–54; sequence MALSCSKVLTFSLSSVVGGDDAKKKLSLCSSSSLSASVNGGGSRNMRVCAAASN. The segment at 55-87 is extension peptide (EP); that stretch reads APAPLTGVIFEPFQELKKDYLAVPIAPNVSLSR. A Ferritin-like diiron domain is found at 88-241; the sequence is QNYSDEAEAA…EYVTQLRLVG (154 aa). Fe cation is bound by residues E105, E140, H143, E189, and Q223.

This sequence belongs to the ferritin family. Oligomer of 24 subunits. There are two types of subunits: L (light) chain and H (heavy) chain. The major chain can be light or heavy, depending on the species and tissue type. The functional molecule forms a roughly spherical shell with a diameter of 12 nm and contains a central cavity into which the insoluble mineral iron core is deposited.

Its subcellular location is the plastid. It localises to the chloroplast. The enzyme catalyses 4 Fe(2+) + O2 + 4 H(+) = 4 Fe(3+) + 2 H2O. Stores iron in a soluble, non-toxic, readily available form. Important for iron homeostasis. Has ferroxidase activity. Iron is taken up in the ferrous form and deposited as ferric hydroxides after oxidation. This Vigna unguiculata (Cowpea) protein is Ferritin-3, chloroplastic.